The primary structure comprises 208 residues: Sodium/potassium-transporting ATPase subunit beta-1-interacting protein 2 (208 aa).

4 helical membrane-spanning segments follow: residues 1-23, 35-55, 64-84, and 148-168; these read MGYC…CVLE, APIL…FGTI, GYAV…CFYL, and VAHS…ACYV.

This sequence belongs to the NKAIN family. Interacts with ATP1B1. As to expression, detected in the brain only and specifically in neurons; expressed in multiple regions such as cerebral cortex, thalamus, cerebellum, olfactory bulb and brainstem, but not in the hippocampus.

Its subcellular location is the cell membrane. The chain is Sodium/potassium-transporting ATPase subunit beta-1-interacting protein 2 (Nkain2) from Mus musculus (Mouse).